Consider the following 176-residue polypeptide: Putative metal-dependent hydrolase BLi00869/BLi00870/BL03027 (176 aa).

Zn(2+) is bound by residues His65, His158, and His162.

It belongs to the metal hydrolase YfiT family. In terms of assembly, homodimer. Zn(2+) serves as cofactor.

It is found in the cytoplasm. Its function is as follows. Possible metal-dependent hydrolase. This is Putative metal-dependent hydrolase BLi00869/BLi00870/BL03027 from Bacillus licheniformis (strain ATCC 14580 / DSM 13 / JCM 2505 / CCUG 7422 / NBRC 12200 / NCIMB 9375 / NCTC 10341 / NRRL NRS-1264 / Gibson 46).